Consider the following 543-residue polypeptide: Chaperonin GroEL 1 (543 aa).

ATP-binding positions include 29-32, 86-90, G413, 479-481, and D495; these read TLGP, DGTTT, and NAA. The segment at 524–543 is disordered; it reads PEPKDAAPAGVGGGGGDFDY. Residues 533–543 are compositionally biased toward gly residues; it reads GVGGGGGDFDY.

The protein belongs to the chaperonin (HSP60) family. In terms of assembly, forms a cylinder of 14 subunits composed of two heptameric rings stacked back-to-back. Interacts with the co-chaperonin GroES.

The protein localises to the cytoplasm. It carries out the reaction ATP + H2O + a folded polypeptide = ADP + phosphate + an unfolded polypeptide.. In terms of biological role, together with its co-chaperonin GroES, plays an essential role in assisting protein folding. The GroEL-GroES system forms a nano-cage that allows encapsulation of the non-native substrate proteins and provides a physical environment optimized to promote and accelerate protein folding. This Anabaena sp. (strain L31) protein is Chaperonin GroEL 1.